A 161-amino-acid chain; its full sequence is UPF0178 protein BruAb1_1955 (161 aa).

The protein belongs to the UPF0178 family.

In Brucella abortus biovar 1 (strain 9-941), this protein is UPF0178 protein BruAb1_1955.